Here is a 320-residue protein sequence, read N- to C-terminus: Solute carrier family 35 member B1 (320 aa).

Helical transmembrane passes span 9-29 (GLRLLVCFLGVFVCYFYYGIL), 49-69 (FALSLVFVQCIVNALFAKLLI), 81-103 (QSWLYSACSLSYLGAMVSSNSAL), 134-154 (YPLTKYLCVLLIVFGVALFMY), 166-186 (TVGYGELLLLLSLTLDGLTGV), 202-222 (MMLSINLWSSLFLGAGIVLTG), 241-261 (IVLFSLTSALGQTFIFMTVVY), and 283-303 (VILFSNPISSIQWVGTLLVFL). Residues 316–320 (KKPSH) carry the Di-lysine motif motif.

It belongs to the nucleotide-sugar transporter family. SLC35B subfamily.

It localises to the endoplasmic reticulum membrane. In terms of biological role, probable sugar transporter. The sequence is that of Solute carrier family 35 member B1 (slc35b1) from Xenopus laevis (African clawed frog).